The following is a 2616-amino-acid chain: Serine protease ndl (2616 aa).

An N-terminal signal peptide occupies residues M1 to S43. A phosphoserine mark is found at S215 and S220. A WIID 1 repeat occupies I261–D269. N291 carries an N-linked (GlcNAc...) asparagine glycan. The WIID 2 repeat unit spans residues I320–D328. Residue N347 is glycosylated (N-linked (GlcNAc...) asparagine). The disordered stretch occupies residues S352–G375. An N-linked (GlcNAc...) asparagine glycan is attached at N379. The stretch at F399–E407 is one WIID 3 repeat. N-linked (GlcNAc...) asparagine glycosylation occurs at N417. 2 WIID repeats span residues F446–E454 and F477–E485. N-linked (GlcNAc...) asparagine glycosylation is found at N492 and N515. The stretch at F528–E536 is one WIID 6 repeat. Low complexity predominate over residues S537 to S547. Positions S537–S574 are disordered. Positions Q548–S565 are enriched in polar residues. S574 and S581 each carry phosphoserine. A glycan (N-linked (GlcNAc...) asparagine) is linked at N598. O-linked (Xyl...) (glycosaminoglycan) serine glycosylation occurs at S794. The disordered stretch occupies residues G798–Q817. A compositionally biased stretch (polar residues) spans F804–Q817. N827 carries an N-linked (GlcNAc...) asparagine glycan. Residue S829 is glycosylated (O-linked (Xyl...) (glycosaminoglycan) serine). The N-linked (GlcNAc...) asparagine glycan is linked to N861. 2 consecutive LDL-receptor class A domains span residues S889 to C929 and F955 to M1006. Intrachain disulfides connect C891-C905, C899-C918, and C912-C927. The region spanning C929 to G956 is the LDL-receptor class A 2; truncated domain. 3 cysteine pairs are disulfide-bonded: C957–C982, C964–C995, and C989–C1004. Residue N975 is glycosylated (N-linked (GlcNAc...) asparagine). Residues R1031 to D1033 carry the Cell attachment site motif. A glycan (N-linked (GlcNAc...) asparagine) is linked at N1064. Phosphoserine occurs at positions 1134 and 1136. One can recognise a Peptidase S1 1 domain in the interval I1145 to T1383. An intrachain disulfide couples C1170 to C1186. Active-site charge relay system residues include H1185 and D1233. 6 cysteine pairs are disulfide-bonded: C1276–C1338, C1305–C1317, C1328–C1359, C1396–C1408, C1401–C1421, and C1415–C1430. The active-site Charge relay system is S1332. One can recognise an LDL-receptor class A 4 domain in the interval Q1394–Y1432. N1445 is a glycosylation site (N-linked (GlcNAc...) asparagine). Disordered stretches follow at residues F1530 to N1557 and P1683 to K1704. 2 stretches are compositionally biased toward low complexity: residues T1537–N1557 and P1683–T1700. Residues F1713–C1743 form the LDL-receptor class A 5; truncated domain. 6 cysteine pairs are disulfide-bonded: C1728/C1745, C1734/C1764, C1758/C1773, C1776/C1789, C1783/C1802, and C1796/C1811. In terms of domain architecture, LDL-receptor class A 6; truncated spans C1745–E1775. The region spanning V1774 to A1813 is the LDL-receptor class A 7 domain. N-linked (GlcNAc...) asparagine glycosylation is found at N1878, N1956, and N2023. Positions L2027–C2301 constitute a Peptidase S1 2 domain. The cysteines at positions 2055 and 2071 are disulfide-linked. N-linked (GlcNAc...) asparagine glycans are attached at residues N2144, N2173, N2197, N2237, and N2269. C2177 and C2230 are disulfide-bonded. LDL-receptor class A domains are found at residues P2308 to Q2346, Q2349 to C2389, and C2419 to G2459. Disulfide bonds link C2310-C2320, C2315-C2333, C2327-C2344, C2351-C2364, C2358-C2377, and C2371-C2387. Positions C2387–C2419 constitute an LDL-receptor class A 10; truncated domain. The N-linked (GlcNAc...) asparagine glycan is linked to N2420. Intrachain disulfides connect C2421/C2435, C2428/C2448, and C2442/C2457. 2 N-linked (GlcNAc...) asparagine glycosylation sites follow: N2556 and N2601.

It belongs to the peptidase S1 family. Requires cleavage for activation (presumably). As to expression, follicle.

The protein resides in the secreted. Its subcellular location is the extracellular space. The protein localises to the extracellular matrix. Its function is as follows. Component of the extracellular signaling pathway that establishes the dorsal-ventral pathway of the embryo. A protease cascade involving ndl, gd, snk and ea results in activation of the spz Toll receptor ligand; acts upstream of gd, snk and ea and is required for proteolytic processing of gd. Activation of ea requires activation of the ndl-gd-snk protease cascade and sulfation of a vitelline membrane component by pip. Localized activation of the Toll receptor in the ventral region of the embryo defines cell identities along the dorsal-ventral continuum. The polypeptide is Serine protease ndl (Drosophila melanogaster (Fruit fly)).